Reading from the N-terminus, the 88-residue chain is Cytochrome c oxidase subunit 6B2 (88 aa).

A disordered region spans residues methionine 1–arginine 22. Residues isoleucine 29–tryptophan 75 enclose the CHCH domain. The Cx9C motif signature appears at cysteine 32–cysteine 42. 2 cysteine pairs are disulfide-bonded: cysteine 32–cysteine 67 and cysteine 42–cysteine 56. Residues cysteine 56–cysteine 67 carry the Cx10C motif motif.

This sequence belongs to the cytochrome c oxidase subunit 6B family. As to quaternary structure, component of the cytochrome c oxidase (complex IV, CIV), a multisubunit enzyme composed of 14 subunits. The complex is composed of a catalytic core of 3 subunits MT-CO1, MT-CO2 and MT-CO3, encoded in the mitochondrial DNA, and 11 supernumerary subunits COX4I1 (or COX4I2), COX5A, COX5B, COX6A1 (or COX6A2), COX6B1 (or COX6B2), COX6C, COX7A2 (or COX7A1), COX7B, COX7C, COX8A and NDUFA4, which are encoded in the nuclear genome. The complex exists as a monomer or a dimer and forms supercomplexes (SCs) in the inner mitochondrial membrane with NADH-ubiquinone oxidoreductase (complex I, CI) and ubiquinol-cytochrome c oxidoreductase (cytochrome b-c1 complex, complex III, CIII), resulting in different assemblies (supercomplex SCI(1)III(2)IV(1) and megacomplex MCI(2)III(2)IV(2)). Testis specific. Weak expression in thymus and heart. Expressed in cancer cell lines.

Its subcellular location is the mitochondrion inner membrane. The protein operates within energy metabolism; oxidative phosphorylation. Its function is as follows. Component of the cytochrome c oxidase, the last enzyme in the mitochondrial electron transport chain which drives oxidative phosphorylation. The respiratory chain contains 3 multisubunit complexes succinate dehydrogenase (complex II, CII), ubiquinol-cytochrome c oxidoreductase (cytochrome b-c1 complex, complex III, CIII) and cytochrome c oxidase (complex IV, CIV), that cooperate to transfer electrons derived from NADH and succinate to molecular oxygen, creating an electrochemical gradient over the inner membrane that drives transmembrane transport and the ATP synthase. Cytochrome c oxidase is the component of the respiratory chain that catalyzes the reduction of oxygen to water. Electrons originating from reduced cytochrome c in the intermembrane space (IMS) are transferred via the dinuclear copper A center (CU(A)) of subunit 2 and heme A of subunit 1 to the active site in subunit 1, a binuclear center (BNC) formed by heme A3 and copper B (CU(B)). The BNC reduces molecular oxygen to 2 water molecules using 4 electrons from cytochrome c in the IMS and 4 protons from the mitochondrial matrix. This Homo sapiens (Human) protein is Cytochrome c oxidase subunit 6B2 (COX6B2).